Reading from the N-terminus, the 486-residue chain is Pup--protein ligase (486 aa).

Position 33 (E33) interacts with Mg(2+). R76 provides a ligand contact to ATP. Y78 contacts Mg(2+). The active-site Proton acceptor is D80. E86 is a binding site for Mg(2+). Residues T89 and W451 each coordinate ATP.

Belongs to the Pup ligase/Pup deamidase family. Pup-conjugating enzyme subfamily.

The enzyme catalyses ATP + [prokaryotic ubiquitin-like protein]-L-glutamate + [protein]-L-lysine = ADP + phosphate + N(6)-([prokaryotic ubiquitin-like protein]-gamma-L-glutamyl)-[protein]-L-lysine.. Its pathway is protein degradation; proteasomal Pup-dependent pathway. The protein operates within protein modification; protein pupylation. In terms of biological role, catalyzes the covalent attachment of the prokaryotic ubiquitin-like protein modifier Pup to the proteasomal substrate proteins, thereby targeting them for proteasomal degradation. This tagging system is termed pupylation. The ligation reaction involves the side-chain carboxylate of the C-terminal glutamate of Pup and the side-chain amino group of a substrate lysine. The sequence is that of Pup--protein ligase from Bifidobacterium longum (strain NCC 2705).